We begin with the raw amino-acid sequence, 107 residues long: Vasopressin-neurophysin 2 (107 aa).

The cysteines at positions 1 and 6 are disulfide-linked. G9 carries the post-translational modification Glycine amide. 7 disulfides stabilise this stretch: C22–C66, C25–C39, C33–C56, C40–C46, C73–C85, C79–C97, and C86–C91.

Belongs to the vasopressin/oxytocin family. In terms of assembly, interacts with vasopressin receptors V1bR/AVPR1B (Ki=85 pM), V1aR/AVPR1A (Ki=0.6 nM) and V2R/AVPR2 (Ki=4.9 nM). Interacts with oxytocin receptor (OXTR) (Ki=110 nM).

The protein localises to the secreted. Functionally, neurophysin 2 specifically binds vasopressin. Its function is as follows. Vasopressin has a direct antidiuretic action on the kidney, it also causes vasoconstriction of the peripheral vessels. Acts by binding to vasopressin receptors (V1bR/AVPR1B, V1aR/AVPR1A, and V2R/AVPR2). The polypeptide is Vasopressin-neurophysin 2 (AVP) (Balaenoptera physalus (Fin whale)).